Consider the following 282-residue polypeptide: Endonuclease V (282 aa).

The Mg(2+) site is built by aspartate 52 and aspartate 126. The interval 250-282 (SLGLPGPPTPRSPKAQRPVACPKGDSGESSALC) is disordered.

The protein belongs to the endonuclease V family. In terms of assembly, monomer. Interacts with PABPC1; the interaction is RNA-dependent and stimulates ENDOV activity. Mg(2+) serves as cofactor.

The protein localises to the cytoplasm. The protein resides in the nucleus. It is found in the nucleolus. Its subcellular location is the stress granule. With respect to regulation, inhibited by normal intracellular concentrations of ATP. Its function is as follows. Endoribonuclease that specifically cleaves inosine-containing RNAs: cleaves RNA at the second phosphodiester bond 3' to inosine. Active against both single-stranded and double-stranded RNAs. Has strong preference for single-stranded RNAs (ssRNAs) toward double-stranded RNAs (dsRNAs). Cleaves mRNAs and tRNAs containing inosine. Also able to cleave structure-specific dsRNA substrates containing the specific sites 5'-IIUI-3' and 5'-UIUU-3'. Inosine is present in a number of RNAs following editing; the function of inosine-specific endoribonuclease is still unclear: it could either play a regulatory role in edited RNAs, or be involved in antiviral response by removing the hyperedited long viral dsRNA genome that has undergone A-to-I editing. Binds branched DNA structures. Endoribonuclease that specifically cleaves inosine-containing RNAs: cleaves RNA at the second phosphodiester bond 3' to inosine. Active against both single-stranded and double-stranded RNAs. Cleaves tRNAs containing inosine. In Homo sapiens (Human), this protein is Endonuclease V (ENDOV).